The chain runs to 104 residues: UPF0235 protein Sfri_2863 (104 aa).

The protein belongs to the UPF0235 family.

The polypeptide is UPF0235 protein Sfri_2863 (Shewanella frigidimarina (strain NCIMB 400)).